A 1182-amino-acid chain; its full sequence is Tyrosine-protein kinase ABL2 (1182 aa).

The interval 1 to 42 is disordered; that stretch reads MGQQVGRVGEAPGLQQPQPRGIRGSSAARPSGRRRDPAGRTA. Gly-2 carries N-myristoyl glycine lipidation. The CAP stretch occupies residues 2–106; that stretch reads GQQVGRVGEA…SKENLLGATE (105 aa). Residues 20 to 30 are compositionally biased toward low complexity; it reads RGIRGSSAARP. At Ser-97 the chain carries Phosphoserine. An SH3 domain is found at 107-167; the sequence is SDPNLFVALY…PSNYITPVNS (61 aa). Residues Tyr-116, Tyr-161, Tyr-174, Tyr-185, Tyr-218, and Tyr-231 each carry the phosphotyrosine modification. The 91-residue stretch at 173–263 folds into the SH2 domain; the sequence is WYHGPVSRSA…GLVTTLHYPA (91 aa). At Tyr-261 the chain carries Phosphotyrosine; by ABL1 and autocatalysis. Position 272 is a phosphotyrosine; by autocatalysis (Tyr-272). Ser-275 carries the post-translational modification Phosphoserine. The Protein kinase domain maps to 288–539; it reads ITMKHKLGGG…PSFAETHQAF (252 aa). Residue 294-302 participates in ATP binding; that stretch reads LGGGQYGEV. Phosphotyrosine is present on residues Tyr-299 and Tyr-303. ATP is bound by residues Lys-317 and 362–368; that span reads EYMPYGN. Catalysis depends on Asp-409, which acts as the Proton acceptor. The short motif at 427-451 is the Kinase activation loop element; that stretch reads DFGLSRLMTGDTYTAHAGAKFPIKW. A Phosphotyrosine; by autocatalysis and SRC-type Tyr-kinases modification is found at Tyr-439. The residue at position 459 (Tyr-459) is a Phosphotyrosine. Tyr-568 is subject to Phosphotyrosine; by autocatalysis. Phosphoserine is present on residues Ser-606, Ser-621, Ser-632, Ser-634, and Ser-656. Disordered regions lie at residues 612 to 642 and 655 to 674; these read IRST…DAKE and SSFM…SSFR. The short motif at 659 to 661 is the Nuclear localization signal element; that stretch reads KKR. Phosphoserine occurs at positions 670, 671, and 672. Residue Tyr-684 is modified to Phosphotyrosine; by autocatalysis. The tract at residues 695–930 is F-actin-binding; sequence SLQNADGFSV…AVLPTTHNHK (236 aa). Phosphotyrosine is present on Tyr-719. Positions 765 to 796 are disordered; it reads LRAGKPTASDDTSKPFPRSNSTSSMSSGLPEQ. The residue at position 778 (Lys-778) is an N6-acetyllysine. The segment covering 782–793 has biased composition (polar residues); the sequence is RSNSTSSMSSGL. The residue at position 785 (Ser-785) is a Phosphoserine. Position 802 is a phosphothreonine (Thr-802). The span at 809–825 shows a compositional bias: polar residues; the sequence is RSKLQLERTVSTSSQPE. The interval 809-858 is disordered; the sequence is RSKLQLERTVSTSSQPEENVDRANDMLPKKSEEGAAPARERPKAKLLPRG. A phosphoserine mark is found at Ser-819 and Ser-822. Positions 827-851 are enriched in basic and acidic residues; it reads NVDRANDMLPKKSEEGAAPARERPK. Residues Ser-915 and Ser-936 each carry the phosphoserine modification. The disordered stretch occupies residues 964-1059; that stretch reads HQVTSSGDKD…TSSISPAKMA (96 aa). Residues 1020–1182 form an F-actin-binding region; the sequence is EGGKKAAPGP…VQEISDVVQR (163 aa).

Belongs to the protein kinase superfamily. Tyr protein kinase family. ABL subfamily. Interacts with PSMA7. Interacts with CTTN. Found in a complex with ABL1, ABL2, CRK and UNC119; leading to the inhibition of CRK phosphorylation by ABL kinases. It depends on Mg(2+) as a cofactor. The cofactor is Mn(2+). In terms of processing, phosphorylated at Tyr-261 by ABL1 in response to oxidative stress. Phosphorylated by PDGFRB. Post-translationally, polyubiquitinated. Polyubiquitination of ABL2 leads to degradation. Most abundant in adult mouse brain, especially in synapse-rich regions.

The protein resides in the cytoplasm. Its subcellular location is the cytoskeleton. It carries out the reaction L-tyrosyl-[protein] + ATP = O-phospho-L-tyrosyl-[protein] + ADP + H(+). With respect to regulation, stabilized in the inactive form by an association between the SH3 domain and the SH2-TK linker region, interactions of the N-terminal cap, and contributions from an N-terminal myristoyl group and phospholipids. Activated by autophosphorylation as well as by SRC-family kinase-mediated phosphorylation. Activated by RIN1 binding to the SH2 and SH3 domains. Inhibited by imatinib mesylate (Gleevec). Phosphatidylinositol 4,5-bisphosphate (PIP2), a highly abundant phosphoinositide known to regulate cytoskeletal and membrane proteins, inhibits the tyrosine kinase activity. In terms of biological role, non-receptor tyrosine-protein kinase that plays an ABL1-overlapping role in key processes linked to cell growth and survival such as cytoskeleton remodeling in response to extracellular stimuli, cell motility and adhesion, receptor endocytosis, autophagy, DNA damage response and apoptosis. Coordinates actin remodeling through tyrosine phosphorylation of proteins controlling cytoskeleton dynamics like MYH10 (involved in movement); CTTN (involved in signaling); or TUBA1 and TUBB (microtubule subunits). Binds directly F-actin and regulates actin cytoskeletal structure through its F-actin-bundling activity. Involved in the regulation of cell adhesion and motility through phosphorylation of key regulators of these processes such as CRK, CRKL or DOK1. Required for adhesion-dependent phosphorylation of ARHGAP35 which promotes its association with RASA1, resulting in recruitment of ARHGAP35 to the cell periphery where it inhibits RHO. Phosphorylates multiple receptor tyrosine kinases like PDGFRB and other substrates which are involved in endocytosis regulation such as RIN1. In brain, may regulate neurotransmission by phosphorylating proteins at the synapse. Finally, functions as its own regulator through autocatalytic activity as well as through phosphorylation of its inhibitor, ABI1. Positively regulates chemokine-mediated T-cell migration, polarization, and homing to lymph nodes and immune-challenged tissues, potentially via activation of NEDD9/HEF1 and RAP1. This chain is Tyrosine-protein kinase ABL2, found in Mus musculus (Mouse).